An 887-amino-acid chain; its full sequence is Probable alpha/beta-glucosidase agdC (887 aa).

The first 17 residues, methionine 1–alanine 17, serve as a signal peptide directing secretion. N-linked (GlcNAc...) asparagine glycans are attached at residues asparagine 171, asparagine 293, and asparagine 373. The active-site Nucleophile is aspartate 422. Residue glutamate 425 is part of the active site. Residues proline 457 to valine 483 are disordered. Aspartate 571 functions as the Proton donor in the catalytic mechanism. Residues asparagine 747 and asparagine 879 are each glycosylated (N-linked (GlcNAc...) asparagine).

This sequence belongs to the glycosyl hydrolase 31 family.

It localises to the secreted. It carries out the reaction Hydrolysis of terminal, non-reducing (1-&gt;4)-linked alpha-D-glucose residues with release of alpha-D-glucose.. The enzyme catalyses Hydrolysis of terminal, non-reducing beta-D-glucosyl residues with release of beta-D-glucose.. In terms of biological role, glucosidase involved in the degradation of cellulosic biomass. Has both alpha- and beta-glucosidase activity. This chain is Probable alpha/beta-glucosidase agdC (agdC), found in Aspergillus clavatus (strain ATCC 1007 / CBS 513.65 / DSM 816 / NCTC 3887 / NRRL 1 / QM 1276 / 107).